The following is a 127-amino-acid chain: Large ribosomal subunit protein uL18 (127 aa).

The protein belongs to the universal ribosomal protein uL18 family. In terms of assembly, part of the 50S ribosomal subunit; part of the 5S rRNA/L5/L18/L25 subcomplex. Contacts the 5S and 23S rRNAs.

Its function is as follows. This is one of the proteins that bind and probably mediate the attachment of the 5S RNA into the large ribosomal subunit, where it forms part of the central protuberance. The sequence is that of Large ribosomal subunit protein uL18 from Streptomyces griseus subsp. griseus (strain JCM 4626 / CBS 651.72 / NBRC 13350 / KCC S-0626 / ISP 5235).